The following is a 481-amino-acid chain: 2-succinylbenzoate--CoA ligase (481 aa).

The protein belongs to the ATP-dependent AMP-binding enzyme family. MenE subfamily.

The enzyme catalyses 2-succinylbenzoate + ATP + CoA = 2-succinylbenzoyl-CoA + AMP + diphosphate. Its pathway is quinol/quinone metabolism; 1,4-dihydroxy-2-naphthoate biosynthesis; 1,4-dihydroxy-2-naphthoate from chorismate: step 5/7. The protein operates within quinol/quinone metabolism; menaquinone biosynthesis. Its function is as follows. Converts 2-succinylbenzoate (OSB) to 2-succinylbenzoyl-CoA (OSB-CoA). The polypeptide is 2-succinylbenzoate--CoA ligase (Bacillus cereus (strain ATCC 10987 / NRS 248)).